The chain runs to 146 residues: Superoxide dismutase [Mn] 2 (146 aa).

3 residues coordinate Mn(2+): H42, D126, and H130.

This sequence belongs to the iron/manganese superoxide dismutase family. Requires Mn(2+) as cofactor.

It catalyses the reaction 2 superoxide + 2 H(+) = H2O2 + O2. In terms of biological role, destroys superoxide anion radicals which are normally produced within the cells and which are toxic to biological systems. The polypeptide is Superoxide dismutase [Mn] 2 (sod2) (Haloferax mediterranei (Halobacterium mediterranei)).